An 86-amino-acid chain; its full sequence is Beta-toxin Tz1 (86 aa).

A signal peptide spans 1–20; the sequence is MTRFVLFICCFFLIGMVVEC. An LCN-type CS-alpha/beta domain is found at 21-83; the sequence is KDGYLVGNDG…TWDRATNRCG (63 aa). Cystine bridges form between cysteine 31–cysteine 82, cysteine 35–cysteine 57, cysteine 43–cysteine 63, and cysteine 47–cysteine 65. Arginine 84 bears the Arginine amide mark.

It belongs to the long (4 C-C) scorpion toxin superfamily. Sodium channel inhibitor family. Beta subfamily. As to expression, expressed by the venom gland.

It is found in the secreted. In terms of biological role, beta toxins bind voltage-independently at site-4 of sodium channels (Nav) and shift the voltage of activation toward more negative potentials thereby affecting sodium channel activation and promoting spontaneous and repetitive firing. Strongly affects skeletal muscle channels Nav1.4/SCN4A, poorly affects the neuronal channels Nav1.6/SCN8A and Nav1.2/SCN2A. Induces spastic paralysis of rear limbs, increased salivation, apnea, tachycardia and increased perspiration. The protein is Beta-toxin Tz1 of Tityus zulianus (Venezuelan scorpion).